The sequence spans 228 residues: Protein Thf1 (228 aa).

Residues 201 to 223 (IKRSKEVVDELSQTERRKREERA) adopt a coiled-coil conformation. The segment at 209–228 (DELSQTERRKREERAVSQPG) is disordered.

Belongs to the THF1 family.

Its function is as follows. May be involved in photosynthetic membrane biogenesis. The sequence is that of Protein Thf1 from Gloeobacter violaceus (strain ATCC 29082 / PCC 7421).